We begin with the raw amino-acid sequence, 321 residues long: YIDGDKGILLYRGYPIDQLAEKGDFLESCYLLLYGELPTQQEKNDFDRCIMQHTMVHEQFSRFFHGFRRDSHPMAVMVACLGAMSAFYHDSIDITDPHQRMIASVRLISKVPTLAAMAYKYSIGQAFVYPRNDLSYAANFLRMCFAVPCEEYKINPVLARAMDQIFILHADHEQNASTSTVRLAGSSGANPFACIAAGVACLWGPAHGGANEACLKMLQEIGSIKRIPEFIARAKDKNDPFRLMGFGHRVYKNYDPRAKIMQKTCHEVLKELNIQDDPLLDIAIELEKIALSDEYFIEKKLYPNVDFYSGITLKALGFPTE.

Active-site residues include His248 and Asp306.

It belongs to the citrate synthase family.

The catalysed reaction is oxaloacetate + acetyl-CoA + H2O = citrate + CoA + H(+). Its pathway is carbohydrate metabolism; tricarboxylic acid cycle; isocitrate from oxaloacetate: step 1/2. In Bartonella elizabethae (Rochalimaea elizabethae), this protein is Citrate synthase (gltA).